The sequence spans 504 residues: Maturase K (504 aa).

Belongs to the intron maturase 2 family. MatK subfamily.

The protein localises to the plastid. Its subcellular location is the chloroplast. In terms of biological role, usually encoded in the trnK tRNA gene intron. Probably assists in splicing its own and other chloroplast group II introns. The polypeptide is Maturase K (Gossypium gossypioides (Mexican cotton)).